Consider the following 796-residue polypeptide: Polyribonucleotide nucleotidyltransferase (796 aa).

Mg(2+) is bound by residues aspartate 490 and aspartate 496. One can recognise a KH domain in the interval 557–616 (PRIESIFINKDKIRNVIGSGGKNIRDICEKTGAKIEIIQDGTVMIYAVNNEAVEYAKSMI). In terms of domain architecture, S1 motif spans 626–693 (GKVFEGTVVE…DREHIQLSMR (68 aa)). Composition is skewed to low complexity over residues 717–728 (DDSCGSTGGSSF), 747–759 (GGSSRSSRRNSNG), and 769–784 (SSNGFGNNNRSFSNSR). Residues 717–796 (DDSCGSTGGS…HDVPRKPRFF (80 aa)) are disordered. Residues 785–796 (NGHDVPRKPRFF) are compositionally biased toward basic and acidic residues.

This sequence belongs to the polyribonucleotide nucleotidyltransferase family. It depends on Mg(2+) as a cofactor.

The protein resides in the cytoplasm. It carries out the reaction RNA(n+1) + phosphate = RNA(n) + a ribonucleoside 5'-diphosphate. Functionally, involved in mRNA degradation. Catalyzes the phosphorolysis of single-stranded polyribonucleotides processively in the 3'- to 5'-direction. The sequence is that of Polyribonucleotide nucleotidyltransferase from Ehrlichia chaffeensis (strain ATCC CRL-10679 / Arkansas).